The following is an 870-amino-acid chain: MOG interacting and ectopic P-granules protein 1 (870 aa).

The disordered stretch occupies residues 1–244 (MVTADETVLA…VPEEDNNEQA (244 aa)). Residues 9-20 (LATTTNTTSMSV) show a composition bias toward polar residues. Residues 41 to 51 (EQLKAEQREVM) are compositionally biased toward basic and acidic residues. Acidic residues-rich tracts occupy residues 77–99 (EVIEIDDTEESTDPSPDGSDENG), 129–142 (IEQDDDGDVMEITE), and 203–214 (IELDDDDDDEIQ). 2 C2H2-type zinc fingers span residues 421–444 (HRCDVCGFQTESKLVMSTHKENLH) and 450–473 (FQCTMCKETDTSEQRMKDHYFETH). A CCHC-type zinc finger spans residues 486-508 (YPCAICEEDFNFKGVREQHYKQC). Composition is skewed to polar residues over residues 673-688 (LQAAVNSMRSQNSQKT) and 695-708 (KLVTTPSHATVGSS). Positions 673–708 (LQAAVNSMRSQNSQKTPTHRSSKLVTTPSHATVGSS) are disordered. 4 C2H2-type zinc fingers span residues 713-736 (FVCEICDASVQEKEKYLQHLQTTH), 753-776 (LACSRCRDRFWTYEGLERHLVMSH), 794-815 (GRCKTCGKNYAFNMLQHLVADH), and 826-849 (YSCDVCAFKCSSYQTLEAHLTSNH). A disordered region spans residues 847–870 (SNHPKGDKKTSTPAKKDDCITLDD). Residues 850-870 (PKGDKKTSTPAKKDDCITLDD) are compositionally biased toward basic and acidic residues.

Interacts with hda-1, let-418, lin-1, mog-1, mog-4, mog-5, mog-6, pie-1 and unc-98. In terms of processing, sumoylated. In terms of tissue distribution, expressed in somatic cells of embryos, the head, hypodermis and tail of larvae and the germline of adults, including oocytes but not mature sperm and spermatocytes.

The protein localises to the nucleus. Its function is as follows. Has a broad role in development, specifically in the genetic pathway SynMuvB that negatively regulates specification of the vulval cell fate. Required for fem-3 3'-UTR-mediated repression in the regulation of the sperm/oocyte switch. Acts by regulating the translation of fem-3 mRNA, by binding to its 3'-UTR. This is MOG interacting and ectopic P-granules protein 1 from Caenorhabditis elegans.